We begin with the raw amino-acid sequence, 1135 residues long: MASGGNQSPPPPPAAAASSEEEEEDGDAADRAQPAGSPSHQIQQRFEELCSRLNMDEAARAEAWSSYRSMSESYTLEGNDLHWLACALYVACRKSVPTVSKGTAEGNYVSLTRILRCSEQSLIEFFNKMKKWEDMANLPPHFRERTERLERNFTVSAVIFKKYEPIFQDIFKYPQEEQPRQQRGRKQRRQPCTTSEIFHFCWVLFIYAKGNFPMISDDLVNSYHLLLCALDLVYGNALQCSNRKELVNPNFKGLSEDCHPKDSKASSDPPCVIEKLCSLHDGLVLEAKGIKEHFWKPYIRKLFEKKLLKGKEENLTGFLEPGNFGESFKAVNKAYEEYVLAAGNLDERVFLGEDAEEEVGTLSRCLSAASGTESAERTQMRDILQQHLDKSKALRVCTPLTGVRYVQENSPCVTPVSTAAHSLSRLHTMLSGLRNAPSEKLERILRSCSRDPTQAIADRLKEMYEIYSQHFQPDENFSNCAKEIANKHFRFAEMLYYKVLESVIEQEQKRLGDMDLSGVLEHDAFHRSLLACCLEVVAFSHKPPGNFPFIAEIFDVPHYHFYKVIEVFIRAEDGLCREVVKHLNQIEEQILDHLAWKTKSPLWDRIRDNENRVPTCEEVMPPQNLERTDEIYIAGSPLTPRRVGEVRADAGGLGRSITSPTTLYDRYSSPTVSTTRRRLFENDSPSEGSTSGRIPPQPLVNAVPVQNVPGETVSVTPVPGQTLVTMATATVTANNGQTVTIPVQGIANENGGITFFPVQVNVGGQAQAVAGSIQPLSAQALAGSLSSQQVTGTTLQVPGPVAIQQISPGGQQQNPGQPLTSSSIRPRKTSSLALFFRKVYYLAGVRLRDLCIKLDISDELRKKIWTCFEFSIIQCTELMMDRHLDQLLMCAIYVMAKVTKEDRSFQNIMRCYRTQPQARSQVYRSVLIKGKRRNSGSSESRSHQNSPTELNTDRASRDSSPVMRSNSTLPVPQPSSAPPTPTRLTGASSDVEEEERGDLIQFYNNIYRKQIQAFAMKYSQANAQTDTPPLSPYPFVRTGSPRRVQLSQSHPIYISPHNNEAMPSPREKIFYYFSNSPSKRLREINSMIRTGETPTKKRGILLDDGSESPAKRICPENHSALLRRLQDVANDRGSQ.

The disordered stretch occupies residues 1–43 (MASGGNQSPPPPPAAAASSEEEEEDGDAADRAQPAGSPSHQIQ). Position 410 is a phosphoserine (Ser410). Thr414 carries the post-translational modification Phosphothreonine. Positions 414–613 (TPVSTAAHSL…DRIRDNENRV (200 aa)) are domain A. The pocket; binds E1A stretch occupies residues 414–1021 (TPVSTAAHSL…QAFAMKYSQA (608 aa)). Ser417 carries O-linked (GlcNAc) serine glycosylation. Residues 614-824 (PTCEEVMPPQ…PGQPLTSSSI (211 aa)) are spacer. Position 636 is a phosphoserine (Ser636). At Thr639 the chain carries Phosphothreonine. Residues Ser659, Ser669, Ser684, Ser942, Ser946, Ser960, Ser965, and Ser967 each carry the phosphoserine modification. 4 stretches are compositionally biased toward polar residues: residues 661 to 674 (TTLY…TVST), 683 to 692 (DSPSEGSTSG), 935 to 950 (SGSS…PTEL), and 958 to 969 (DSSPVMRSNSTL). Disordered regions lie at residues 661-698 (TTLY…PPQP) and 930-994 (GKRR…VEEE). The tract at residues 825 to 1021 (RPRKTSSLAL…QAFAMKYSQA (197 aa)) is domain B. A Phosphothreonine modification is found at Thr968. A compositionally biased stretch (pro residues) spans 971–981 (VPQPSSAPPTP). 2 positions are modified to phosphoserine: Ser975 and Ser976. At Thr980 the chain carries Phosphothreonine. A phosphoserine mark is found at Ser1031, Ser1064, Ser1076, and Ser1108.

It belongs to the retinoblastoma protein (RB) family. In terms of assembly, interacts with AATF and RINT1. Component of the DREAM complex (also named LINC complex) at least composed of E2F4, E2F5, LIN9, LIN37, LIN52, LIN54, MYBL1, MYBL2, RBL1, RBL2, RBBP4, TFDP1 and TFDP2. The complex exists in quiescent cells where it represses cell cycle-dependent genes. It dissociates in S phase when LIN9, LIN37, LIN52 and LIN54 form a subcomplex that binds to MYBL2. Interacts with USP4. Interacts with KMT5B, KMT5C and USP4. Interacts with PML. Interacts with RBBP9. Interacts with CD53. During G0 and early G1 phase of the cell cycle, phosphorylated on Ser-636 and on 5 sites within the domain B. Phosphorylation on Ser-669 in G1 leads to its ubiquitin-dependent proteolysis.

The protein localises to the nucleus. In terms of biological role, key regulator of entry into cell division. Directly involved in heterochromatin formation by maintaining overall chromatin structure and, in particular, that of constitutive heterochromatin by stabilizing histone methylation. Recruits and targets histone methyltransferases KMT5B and KMT5C, leading to epigenetic transcriptional repression. Controls histone H4 'Lys-20' trimethylation. Probably acts as a transcription repressor by recruiting chromatin-modifying enzymes to promoters. Potent inhibitor of E2F-mediated trans-activation, associates preferentially with E2F5. Binds to cyclins A and E. Binds to and may be involved in the transforming capacity of the adenovirus E1A protein. May act as a tumor suppressor. This Mus musculus (Mouse) protein is Retinoblastoma-like protein 2 (Rbl2).